The sequence spans 504 residues: Maturase K (504 aa).

The protein belongs to the intron maturase 2 family. MatK subfamily.

It localises to the plastid. The protein localises to the chloroplast. Usually encoded in the trnK tRNA gene intron. Probably assists in splicing its own and other chloroplast group II introns. The chain is Maturase K from Carpinus betulus (European hornbeam).